The chain runs to 254 residues: Thiazole synthase (254 aa).

Lysine 96 acts as the Schiff-base intermediate with DXP in catalysis. 1-deoxy-D-xylulose 5-phosphate-binding positions include glycine 157, 183–184, and 205–206; these read AG and NT.

This sequence belongs to the ThiG family. In terms of assembly, homotetramer. Forms heterodimers with either ThiH or ThiS.

It is found in the cytoplasm. It carries out the reaction [ThiS sulfur-carrier protein]-C-terminal-Gly-aminoethanethioate + 2-iminoacetate + 1-deoxy-D-xylulose 5-phosphate = [ThiS sulfur-carrier protein]-C-terminal Gly-Gly + 2-[(2R,5Z)-2-carboxy-4-methylthiazol-5(2H)-ylidene]ethyl phosphate + 2 H2O + H(+). It functions in the pathway cofactor biosynthesis; thiamine diphosphate biosynthesis. Functionally, catalyzes the rearrangement of 1-deoxy-D-xylulose 5-phosphate (DXP) to produce the thiazole phosphate moiety of thiamine. Sulfur is provided by the thiocarboxylate moiety of the carrier protein ThiS. In vitro, sulfur can be provided by H(2)S. This Bacillus velezensis (strain DSM 23117 / BGSC 10A6 / LMG 26770 / FZB42) (Bacillus amyloliquefaciens subsp. plantarum) protein is Thiazole synthase.